The primary structure comprises 299 residues: Putative activator of 90 kDa heat shock protein ATPase homolog 2 (299 aa).

This sequence belongs to the AHA1 family.

Functionally, co-chaperone that stimulates HSP90 ATPase activity. This is Putative activator of 90 kDa heat shock protein ATPase homolog 2 from Homo sapiens (Human).